Consider the following 945-residue polypeptide: Valine--tRNA ligase (945 aa).

A 'HIGH' region motif is present at residues 42–52; it reads PNVTGTLHMGH. Positions 552 to 556 match the 'KMSKS' region motif; that stretch reads KMSKS. Lys-555 contacts ATP. Residues 879–945 are a coiled coil; sequence DKATETARLS…VQTQLSKLKD (67 aa).

Belongs to the class-I aminoacyl-tRNA synthetase family. ValS type 1 subfamily. As to quaternary structure, monomer.

Its subcellular location is the cytoplasm. It carries out the reaction tRNA(Val) + L-valine + ATP = L-valyl-tRNA(Val) + AMP + diphosphate. Catalyzes the attachment of valine to tRNA(Val). As ValRS can inadvertently accommodate and process structurally similar amino acids such as threonine, to avoid such errors, it has a 'posttransfer' editing activity that hydrolyzes mischarged Thr-tRNA(Val) in a tRNA-dependent manner. The polypeptide is Valine--tRNA ligase (Neisseria meningitidis serogroup A / serotype 4A (strain DSM 15465 / Z2491)).